The sequence spans 49 residues: Large ribosomal subunit protein bL33B (49 aa).

It belongs to the bacterial ribosomal protein bL33 family.

This chain is Large ribosomal subunit protein bL33B, found in Bacillus cereus (strain ATCC 14579 / DSM 31 / CCUG 7414 / JCM 2152 / NBRC 15305 / NCIMB 9373 / NCTC 2599 / NRRL B-3711).